Reading from the N-terminus, the 1270-residue chain is DNA-directed RNA polymerase subunit beta (1270 aa).

Belongs to the RNA polymerase beta chain family. In terms of assembly, the RNAP catalytic core consists of 2 alpha, 1 beta, 1 beta' and 1 omega subunit. When a sigma factor is associated with the core the holoenzyme is formed, which can initiate transcription.

It catalyses the reaction RNA(n) + a ribonucleoside 5'-triphosphate = RNA(n+1) + diphosphate. Its function is as follows. DNA-dependent RNA polymerase catalyzes the transcription of DNA into RNA using the four ribonucleoside triphosphates as substrates. This chain is DNA-directed RNA polymerase subunit beta, found in Phocaeicola vulgatus (strain ATCC 8482 / DSM 1447 / JCM 5826 / CCUG 4940 / NBRC 14291 / NCTC 11154) (Bacteroides vulgatus).